The following is an 801-amino-acid chain: Probable inorganic carbon transporter subunit DabA (801 aa).

Residues C330, D332, H489, and C504 each coordinate Zn(2+).

It belongs to the inorganic carbon transporter (TC 9.A.2) DabA family. Forms a complex with DabB. Zn(2+) serves as cofactor.

It is found in the cell inner membrane. Functionally, part of an energy-coupled inorganic carbon pump. The protein is Probable inorganic carbon transporter subunit DabA of Jannaschia sp. (strain CCS1).